Here is a 382-residue protein sequence, read N- to C-terminus: MTEFWLISAPGEKTCQQTWEKLHAATTKNNNLAVSSKFNIPDLKVGTLDVLVGLSDELAKLDAFVEGVVKKVAQYMADVLEDSKDKVQENLLASGVDLVTYITRFQWDMAKYPIKQSLKNISEIIAKGVTQIDNDLKSRASAYNNLKGNLQNLERKNAGSLLTRSLAEIVKKDDFVLDSEYLVTLLVVVPKLNHNDWIKQYETLAEMVVPRSSNVLSEDQDSYLCNVTLFKKAVDDFRHKARENKFIVRDFQYNEEEMRADKEEMNRLSTDKKKQFGPLVRWLKVNFSEAFIAWIHIKALRVFVESVLRYGLPVNFQAMLLQPNKKSVKKLREVLHELYKHLDSSAAAIIDAPMDIPGLNLSQQEYYPYVYYKIDCNLLEFK.

N-acetylthreonine is present on threonine 2.

This sequence belongs to the V-ATPase C subunit family. As to quaternary structure, V-ATPase is a heteromultimeric enzyme made up of two complexes: the ATP-hydrolytic V1 complex and the proton translocation V0 complex. The V1 complex consists of three catalytic AB heterodimers that form a heterohexamer, three peripheral stalks each consisting of EG heterodimers, one central rotor including subunits D and F, and the regulatory subunits C and H. The proton translocation complex V0 consists of the proton transport subunit a, a ring of proteolipid subunits c9c'', rotary subunit d, subunits e and f, and the accessory subunits ATP6AP1/Ac45 and ATP6AP2/PRR. Expressed in brain (at protein level).

Its subcellular location is the cytoplasmic vesicle. The protein resides in the secretory vesicle. It localises to the synaptic vesicle membrane. It is found in the clathrin-coated vesicle membrane. Subunit of the V1 complex of vacuolar(H+)-ATPase (V-ATPase), a multisubunit enzyme composed of a peripheral complex (V1) that hydrolyzes ATP and a membrane integral complex (V0) that translocates protons. V-ATPase is responsible for acidifying and maintaining the pH of intracellular compartments and in some cell types, is targeted to the plasma membrane, where it is responsible for acidifying the extracellular environment. Subunit C is necessary for the assembly of the catalytic sector of the enzyme and is likely to have a specific function in its catalytic activity. The polypeptide is V-type proton ATPase subunit C 1 (Atp6v1c1) (Rattus norvegicus (Rat)).